A 120-amino-acid polypeptide reads, in one-letter code: Spermidine export protein MdtJ (120 aa).

4 consecutive transmembrane segments (helical) span residues 1–21 (MFYW…TLSM), 31–51 (AGFI…SFAV), 54–74 (IALG…ITIF), and 81–101 (EALS…IVLI).

Belongs to the drug/metabolite transporter (DMT) superfamily. Small multidrug resistance (SMR) (TC 2.A.7.1) family. MdtJ subfamily. As to quaternary structure, forms a complex with MdtI.

It localises to the cell inner membrane. Functionally, catalyzes the excretion of spermidine. In Salmonella agona (strain SL483), this protein is Spermidine export protein MdtJ.